Here is a 534-residue protein sequence, read N- to C-terminus: Inosine-5'-monophosphate dehydrogenase (534 aa).

2 consecutive CBS domains span residues 117 to 181 and 190 to 255; these read YVMQ…GTPI and TTPI…PMAS. Residues 292–294 and 342–344 each bind NAD(+); these read DSS and GMG. Positions 344 and 346 each coordinate K(+). Residue Ser-347 coordinates IMP. Cys-349 serves as a coordination point for K(+). Cys-349 acts as the Thioimidate intermediate in catalysis. Residues 382 to 384, 405 to 406, and 430 to 434 contribute to the IMP site; these read DGG, GG, and YRGMG. The Proton acceptor role is filled by Arg-448. Residue Gln-461 participates in IMP binding. Positions 520, 521, and 522 each coordinate K(+).

The protein belongs to the IMPDH/GMPR family. In terms of assembly, homotetramer. K(+) serves as cofactor.

The protein localises to the cytoplasm. It carries out the reaction IMP + NAD(+) + H2O = XMP + NADH + H(+). It participates in purine metabolism; XMP biosynthesis via de novo pathway; XMP from IMP: step 1/1. With respect to regulation, mycophenolic acid (MPA) is a non-competitive inhibitor that prevents formation of the closed enzyme conformation by binding to the same site as the amobile flap. In contrast, mizoribine monophosphate (MZP) is a competitive inhibitor that induces the closed conformation. MPA is a potent inhibitor of mammalian IMPDHs but a poor inhibitor of the bacterial enzymes. MZP is a more potent inhibitor of bacterial IMPDH. In terms of biological role, catalyzes the conversion of inosine 5'-phosphate (IMP) to xanthosine 5'-phosphate (XMP), the first committed and rate-limiting step in the de novo synthesis of guanine nucleotides, and therefore plays an important role in the regulation of cell growth. This chain is Inosine-5'-monophosphate dehydrogenase, found in Caenorhabditis elegans.